The chain runs to 159 residues: MQKRAIYPGTFDPITNGHIDIVTRATQMFDHVILAIAASPSKKPMFTLEERVALAQQATAHLGNVEVVGFSDLMANFARNQHATVLIRGLRAVADFEYEMQLAHMNRHLMPELESVFLMPSKEWSFISSSLVKEVARHQGDVTHFLPENVHQALMAKLA.

Position 10 (threonine 10) interacts with substrate. ATP-binding positions include 10-11 (TF) and histidine 18. Substrate contacts are provided by lysine 42, methionine 74, and arginine 88. Residues 89–91 (GLR), glutamate 99, and 124–130 (WSFISSS) contribute to the ATP site.

The protein belongs to the bacterial CoaD family. In terms of assembly, homohexamer. Mg(2+) is required as a cofactor.

The protein localises to the cytoplasm. The enzyme catalyses (R)-4'-phosphopantetheine + ATP + H(+) = 3'-dephospho-CoA + diphosphate. The protein operates within cofactor biosynthesis; coenzyme A biosynthesis; CoA from (R)-pantothenate: step 4/5. Reversibly transfers an adenylyl group from ATP to 4'-phosphopantetheine, yielding dephospho-CoA (dPCoA) and pyrophosphate. This chain is Phosphopantetheine adenylyltransferase, found in Escherichia coli (strain SMS-3-5 / SECEC).